The chain runs to 219 residues: Ribose-5-phosphate isomerase A (219 aa).

Substrate is bound by residues 28–31, 81–84, and 94–97; these read SGST, DGAD, and KGGG. The Proton acceptor role is filled by E103. K121 contributes to the substrate binding site.

This sequence belongs to the ribose 5-phosphate isomerase family. In terms of assembly, homodimer.

The enzyme catalyses aldehydo-D-ribose 5-phosphate = D-ribulose 5-phosphate. It functions in the pathway carbohydrate degradation; pentose phosphate pathway; D-ribose 5-phosphate from D-ribulose 5-phosphate (non-oxidative stage): step 1/1. Functionally, catalyzes the reversible conversion of ribose-5-phosphate to ribulose 5-phosphate. The sequence is that of Ribose-5-phosphate isomerase A from Haemophilus influenzae (strain ATCC 51907 / DSM 11121 / KW20 / Rd).